Consider the following 505-residue polypeptide: tRNA-2-methylthio-N(6)-dimethylallyladenosine synthase (505 aa).

An MTTase N-terminal domain is found at 14 to 132 (RTYEVRTYGC…LPVLLERARV (119 aa)). The [4Fe-4S] cluster site is built by Cys23, Cys61, Cys95, Cys169, Cys173, and Cys176. Residues 155 to 386 (RESAYAAWVS…ALQEEISWEE (232 aa)) enclose the Radical SAM core domain. One can recognise a TRAM domain in the interval 388-456 (KKQVGRTLEL…PHHLLAEGPV (69 aa)).

The protein belongs to the methylthiotransferase family. MiaB subfamily. Monomer. It depends on [4Fe-4S] cluster as a cofactor.

The protein resides in the cytoplasm. It catalyses the reaction N(6)-dimethylallyladenosine(37) in tRNA + (sulfur carrier)-SH + AH2 + 2 S-adenosyl-L-methionine = 2-methylsulfanyl-N(6)-dimethylallyladenosine(37) in tRNA + (sulfur carrier)-H + 5'-deoxyadenosine + L-methionine + A + S-adenosyl-L-homocysteine + 2 H(+). Functionally, catalyzes the methylthiolation of N6-(dimethylallyl)adenosine (i(6)A), leading to the formation of 2-methylthio-N6-(dimethylallyl)adenosine (ms(2)i(6)A) at position 37 in tRNAs that read codons beginning with uridine. This Streptomyces viridosporus (strain ATCC 14672 / DSM 40746 / JCM 4963 / KCTC 9882 / NRRL B-12104 / FH 1290) (Streptomyces ghanaensis) protein is tRNA-2-methylthio-N(6)-dimethylallyladenosine synthase.